The following is a 464-amino-acid chain: Cysteine--tRNA ligase (464 aa).

C28 contributes to the Zn(2+) binding site. The short motif at 30 to 40 is the 'HIGH' region element; sequence PTVYDHSHIGH. Residues C205, H230, and E234 each coordinate Zn(2+). The short motif at 263–267 is the 'KMSKS' region element; the sequence is KMSKS. K266 provides a ligand contact to ATP.

Belongs to the class-I aminoacyl-tRNA synthetase family. Zn(2+) is required as a cofactor.

It is found in the cytoplasm. The catalysed reaction is tRNA(Cys) + L-cysteine + ATP = L-cysteinyl-tRNA(Cys) + AMP + diphosphate. This is Cysteine--tRNA ligase from Ignicoccus hospitalis (strain KIN4/I / DSM 18386 / JCM 14125).